Consider the following 185-residue polypeptide: Ribosome-recycling factor (185 aa).

The disordered stretch occupies residues 137–166; that stretch reads DGLKKAEKDGDIGQDESRGQSEKVQKMTDD.

The protein belongs to the RRF family.

It localises to the cytoplasm. Responsible for the release of ribosomes from messenger RNA at the termination of protein biosynthesis. May increase the efficiency of translation by recycling ribosomes from one round of translation to another. In Agrobacterium fabrum (strain C58 / ATCC 33970) (Agrobacterium tumefaciens (strain C58)), this protein is Ribosome-recycling factor.